Consider the following 720-residue polypeptide: MEEAEELLLEGKKALQLAREPRLGLDLGWNPSGEGCTQGLKDVPPEPTRDILALKSLPRGLALGPSLAKEQRLGVWCVGDPLQPGLLWGPLEEESASKEKGEGVKPRQEENLSLGPWGDVCACEQSSGWTSLVQRGRLESEGNVAPVRISERLHLQVYQLVLPGSELLLWPQPSSEGPSLTQPGLDKEAAVAVVTEVESAVQQEVASPGEDAAEPCIDPGSQSPSGIQAENMVSPGLKFPTQDRISKDSQPLGPLLQDGDVDEECPAQAQMPPELQSNSATQQDPDGSGASFSSSARGTQPHGYLAKKLHSPSDQCPPRAKTPEPGAQQSGFPTLSRSPPGPAGSSPKQGRRYRCGECGKAFLQLCHLKKHAFVHTGHKPFLCTECGKSYSSEESFKAHMLGHRGVRPFPCPQCDKAYGTQRDLKEHQVVHSGARPFACDQCGKAFARRPSLRLHRKTHQVPAAPAPCPCPVCGRPLANQGSLRNHMRLHTGEKPFLCPHCGRAFRQRGNLRGHLRLHTGERPYRCPHCADAFPQLPELRRHLISHTGEAHLCPVCGKALRDPHTLRAHERLHSGERPFPCPQCGRAYTLATKLRRHLKSHLEDKPYRCPTCGMGYTLPQSLRRHQLSHRPEAPCSPPSVPSAASEPTVVLLQAEPQLLDTHREEEVSPARDVVEVTISESQEKCFVVPEEPDAAPSLVLIHKDMGLGAWAEVVEVEMGT.

The disordered stretch occupies residues 201 to 350; that stretch reads VQQEVASPGE…GPAGSSPKQG (150 aa). A compositionally biased stretch (polar residues) spans 275–285; sequence LQSNSATQQDP. Positions 287 to 296 are enriched in low complexity; it reads GSGASFSSSA. Thr-322 is modified (phosphothreonine). 10 consecutive C2H2-type zinc fingers follow at residues 353-375, 381-403, 409-431, 437-459, 468-490, 496-518, 524-546, 551-573, 579-601, and 607-629; these read YRCG…AFVH, FLCT…MLGH, FPCP…QVVH, FACD…RKTH, CPCP…MRLH, FLCP…LRLH, YRCP…LISH, HLCP…ERLH, FPCP…LKSH, and YRCP…QLSH.

In terms of tissue distribution, highest expression is observed in adult retina; abundantly expressed in the fetal eye. In the retina, it is detected in the outer nuclear layer, especially cone and rod photoreceptor cells, ganglion cell layer and both outer and inner plexiform layers (at protein level). Expressed in retinal blood vessels (at protein level).

Its subcellular location is the nucleus. Its function is as follows. May be involved in transcriptional regulation. The protein is Zinc finger protein 408 (ZNF408) of Homo sapiens (Human).